We begin with the raw amino-acid sequence, 230 residues long: 7-cyano-7-deazaguanine synthase (230 aa).

Phenylalanine 8–leucine 18 contacts ATP. Cysteine 187, cysteine 196, cysteine 199, and cysteine 202 together coordinate Zn(2+).

The protein belongs to the QueC family. The cofactor is Zn(2+).

The enzyme catalyses 7-carboxy-7-deazaguanine + NH4(+) + ATP = 7-cyano-7-deazaguanine + ADP + phosphate + H2O + H(+). The protein operates within purine metabolism; 7-cyano-7-deazaguanine biosynthesis. Catalyzes the ATP-dependent conversion of 7-carboxy-7-deazaguanine (CDG) to 7-cyano-7-deazaguanine (preQ(0)). The chain is 7-cyano-7-deazaguanine synthase from Shewanella amazonensis (strain ATCC BAA-1098 / SB2B).